A 159-amino-acid chain; its full sequence is Ribosomal RNA large subunit methyltransferase H (159 aa).

S-adenosyl-L-methionine contacts are provided by residues Leu-76, Gly-108, and 127–132 (FSKMTF).

This sequence belongs to the RNA methyltransferase RlmH family. In terms of assembly, homodimer.

Its subcellular location is the cytoplasm. The catalysed reaction is pseudouridine(1915) in 23S rRNA + S-adenosyl-L-methionine = N(3)-methylpseudouridine(1915) in 23S rRNA + S-adenosyl-L-homocysteine + H(+). Functionally, specifically methylates the pseudouridine at position 1915 (m3Psi1915) in 23S rRNA. The protein is Ribosomal RNA large subunit methyltransferase H of Staphylococcus haemolyticus (strain JCSC1435).